The following is a 256-amino-acid chain: 3-hydroxy-5-phosphonooxypentane-2,4-dione thiolase (256 aa).

Lys168 functions as the Schiff-base intermediate with substrate in the catalytic mechanism.

The protein belongs to the DeoC/FbaB aldolase family. In terms of assembly, homodecamer.

The protein localises to the cytoplasm. The catalysed reaction is dihydroxyacetone phosphate + acetyl-CoA = 3-hydroxy-2,4-dioxopentyl phosphate + CoA. Its function is as follows. Involved in the degradation of phospho-AI-2, thereby terminating induction of the lsr operon and closing the AI-2 signaling cycle. Catalyzes the transfer of an acetyl moiety from 3-hydroxy-5-phosphonooxypentane-2,4-dione to CoA to form glycerone phosphate and acetyl-CoA. This chain is 3-hydroxy-5-phosphonooxypentane-2,4-dione thiolase (lsrF), found in Shigella flexneri.